We begin with the raw amino-acid sequence, 500 residues long: Sodium/potassium/calcium exchanger 5 (500 aa).

The N-terminal stretch at 1-29 (MQTKGGQTWARRALLLGILWATAHLPLSG) is a signal peptide. At 30–66 (TSLPQRLPRATGNSTQCVISPSSEFPEGFFTRQERRD) the chain is on the extracellular side. Residues 67–87 (GGIIIYFLIIVYMFMAISIVC) form a helical membrane-spanning segment. The Cytoplasmic segment spans residues 88–111 (DEYFLPSLEIISESLGLSQDVAGT). Residues 112–132 (TFMAAGSSAPELVTAFLGVFI) form a helical membrane-spanning segment. Over 133 to 136 (TKGD) the chain is Extracellular. The chain crosses the membrane as a helical span at residues 137–157 (IGISTILGSAIYNLLGICAAC). Over 158-169 (GLLSNTVSTLSC) the chain is Cytoplasmic. The helical transmembrane segment at 170-190 (WPLFRDCAAYTISAAAVLGII) threads the bilayer. The Extracellular portion of the chain corresponds to 191 to 195 (YDNQV). A helical membrane pass occupies residues 196 to 216 (YWYEGALLLLIYGLYVLVLCF). Over 217-302 (DIKINQYIIK…PSVFNMPEAD (86 aa)) the chain is Cytoplasmic. The chain crosses the membrane as a helical span at residues 303–323 (LKRIFWVLSLPIITLLFLTTP). Residues 324-333 (DCRKKFWKNY) lie on the Extracellular side of the membrane. The chain crosses the membrane as a helical span at residues 334–354 (FVITFFMSAIWISAFTYILVW). At 355-368 (MVTITGETLEIPDT) the chain is on the cytoplasmic side. The chain crosses the membrane as a helical span at residues 369–389 (VMGLTLLAAGTSIPDTIASVL). Residues 390–399 (VARKGKGDMA) are Extracellular-facing. A helical membrane pass occupies residues 400-420 (MSNIVGSNVFDMLCLGIPWFI). Over 421 to 437 (KTAFINGSAPAEVNSRG) the chain is Cytoplasmic. Residues 438–458 (LTYITISLNISIIFLFLAVHF) form a helical membrane-spanning segment. Residues 459 to 468 (NGWKLDRKLG) are Extracellular-facing. A helical membrane pass occupies residues 469-489 (IVCLLSYLGLATLSVLYELGI). The Cytoplasmic segment spans residues 490–500 (IGNNKIRGCGG).

Belongs to the Ca(2+):cation antiporter (CaCA) (TC 2.A.19) family. SLC24A subfamily.

The protein localises to the golgi apparatus. It is found in the trans-Golgi network membrane. It localises to the melanosome. The catalysed reaction is Ca(2+)(out) + K(+)(out) + 4 Na(+)(in) = Ca(2+)(in) + K(+)(in) + 4 Na(+)(out). In terms of biological role, calcium, potassium:sodium antiporter that transports 1 Ca(2+) and 1 K(+) to the melanosome in exchange for 4 cytoplasmic Na(+). Involved in pigmentation, possibly by participating in ion transport in melanosomes. Predominant sodium-calcium exchanger in melanocytes. This chain is Sodium/potassium/calcium exchanger 5, found in Homo sapiens (Human).